The sequence spans 405 residues: MSLTQSKEVNSLSRRYSTYIERRITRTVMVGDIAIGSDYPVRVQSMINEDTMDVDNSYLAIKRLHEVGCEIVRLTVPSLAHAKAVGDIKEKLIKNNIDTPLVADVHHNGMKIAMEVAKHVDKVRINPGLFVFEKSDPTRTEYTDTEFETIKKTILKRFTPLVEVLKSENKALRIGVNHGSLSERMLFTYGDTPLGMTESAMEFVKICDELDFHNIIISMKASRAPVMLAAYRMIADRLDAEGYNYPLHLGVTEAGDGDYGRIKSTAGIGTLLAEGLGDTIRVSLTEAPEKEIPVCYSILQSLGLRKTMVEYISCPSCGRTLFNLEEVVDKVRKATSHLTGLDIAIMGCIVNGPGEMADADYGYVGKGKGTIALYRRKEEIKRVPEDEGVDALIRLIKDDGKWIDP.

Residues C314, C317, C348, and E355 each coordinate [4Fe-4S] cluster.

Belongs to the IspG family. [4Fe-4S] cluster serves as cofactor.

The enzyme catalyses (2E)-4-hydroxy-3-methylbut-2-enyl diphosphate + 2 oxidized [2Fe-2S]-[ferredoxin] + H2O = 2-C-methyl-D-erythritol 2,4-cyclic diphosphate + 2 reduced [2Fe-2S]-[ferredoxin] + H(+). It functions in the pathway isoprenoid biosynthesis; isopentenyl diphosphate biosynthesis via DXP pathway; isopentenyl diphosphate from 1-deoxy-D-xylulose 5-phosphate: step 5/6. In terms of biological role, converts 2C-methyl-D-erythritol 2,4-cyclodiphosphate (ME-2,4cPP) into 1-hydroxy-2-methyl-2-(E)-butenyl 4-diphosphate. The protein is 4-hydroxy-3-methylbut-2-en-1-yl diphosphate synthase (ferredoxin) of Prochlorococcus marinus subsp. pastoris (strain CCMP1986 / NIES-2087 / MED4).